Here is a 491-residue protein sequence, read N- to C-terminus: Glutamyl-tRNA(Gln) amidotransferase subunit A (491 aa).

Residues lysine 77 and serine 152 each act as charge relay system in the active site. Serine 176 serves as the catalytic Acyl-ester intermediate.

Belongs to the amidase family. GatA subfamily. In terms of assembly, heterotrimer of A, B and C subunits.

The catalysed reaction is L-glutamyl-tRNA(Gln) + L-glutamine + ATP + H2O = L-glutaminyl-tRNA(Gln) + L-glutamate + ADP + phosphate + H(+). Allows the formation of correctly charged Gln-tRNA(Gln) through the transamidation of misacylated Glu-tRNA(Gln) in organisms which lack glutaminyl-tRNA synthetase. The reaction takes place in the presence of glutamine and ATP through an activated gamma-phospho-Glu-tRNA(Gln). This chain is Glutamyl-tRNA(Gln) amidotransferase subunit A, found in Chlamydia abortus (strain DSM 27085 / S26/3) (Chlamydophila abortus).